A 497-amino-acid polypeptide reads, in one-letter code: Glycerol kinase (497 aa).

Threonine 13 is a binding site for ADP. 3 residues coordinate ATP: threonine 13, threonine 14, and serine 15. Threonine 13 is a binding site for sn-glycerol 3-phosphate. Residue arginine 17 coordinates ADP. Sn-glycerol 3-phosphate is bound by residues arginine 83, glutamate 84, and tyrosine 135. Residues arginine 83, glutamate 84, and tyrosine 135 each coordinate glycerol. The residue at position 231 (histidine 231) is a Phosphohistidine; by HPr. Aspartate 245 lines the sn-glycerol 3-phosphate pocket. 2 residues coordinate glycerol: aspartate 245 and glutamine 246. The ADP site is built by threonine 267 and glycine 310. ATP contacts are provided by threonine 267, glycine 310, glutamine 314, and glycine 411. The ADP site is built by glycine 411 and asparagine 415.

Belongs to the FGGY kinase family. Homotetramer and homodimer (in equilibrium). Post-translationally, the phosphoenolpyruvate-dependent sugar phosphotransferase system (PTS), including enzyme I, and histidine-containing protein (HPr) are required for the phosphorylation, which leads to the activation of the enzyme.

It catalyses the reaction glycerol + ATP = sn-glycerol 3-phosphate + ADP + H(+). The protein operates within polyol metabolism; glycerol degradation via glycerol kinase pathway; sn-glycerol 3-phosphate from glycerol: step 1/1. Its activity is regulated as follows. Activated by phosphorylation and inhibited by fructose 1,6-bisphosphate (FBP). In terms of biological role, key enzyme in the regulation of glycerol uptake and metabolism. Catalyzes the phosphorylation of glycerol to yield sn-glycerol 3-phosphate. This Listeria welshimeri serovar 6b (strain ATCC 35897 / DSM 20650 / CCUG 15529 / CIP 8149 / NCTC 11857 / SLCC 5334 / V8) protein is Glycerol kinase.